The chain runs to 145 residues: Large ribosomal subunit protein uL11 (145 aa).

Belongs to the universal ribosomal protein uL11 family. As to quaternary structure, part of the ribosomal stalk of the 50S ribosomal subunit. Interacts with L10 and the large rRNA to form the base of the stalk. L10 forms an elongated spine to which L12 dimers bind in a sequential fashion forming a multimeric L10(L12)X complex. In terms of processing, one or more lysine residues are methylated.

Its function is as follows. Forms part of the ribosomal stalk which helps the ribosome interact with GTP-bound translation factors. This chain is Large ribosomal subunit protein uL11, found in Sulfurihydrogenibium sp. (strain YO3AOP1).